The sequence spans 821 residues: Ent-isokaur-15-ene synthase (821 aa).

Mg(2+)-binding residues include Asp556, Asp560, Asn701, Thr705, and Glu709. Positions 556–560 (DDFFD) match the DDXXD motif motif.

The protein belongs to the terpene synthase family. Mg(2+) is required as a cofactor.

The enzyme catalyses ent-copalyl diphosphate = ent-isokaurene + diphosphate. It participates in secondary metabolite biosynthesis; terpenoid biosynthesis. Its function is as follows. Involved in the biosynthesis of ent-kaurene diterpenoids natural products. Catalyzes the conversion of ent-copalyl diphosphate to the phytoalexin precursor ent-isokaur-15-ene. The chain is Ent-isokaur-15-ene synthase from Oryza sativa subsp. indica (Rice).